Consider the following 369-residue polypeptide: Molybdenum import ATP-binding protein ModC (369 aa).

Residues Thr3–Ser246 form the ABC transporter domain. Position 44–51 (Gly44–Thr51) interacts with ATP. The Mop domain maps to Asp305–Gly369.

This sequence belongs to the ABC transporter superfamily. Molybdate importer (TC 3.A.1.8) family. The complex is composed of two ATP-binding proteins (ModC), two transmembrane proteins (ModB) and a solute-binding protein (ModA).

It is found in the cell inner membrane. It catalyses the reaction molybdate(out) + ATP + H2O = molybdate(in) + ADP + phosphate + H(+). Functionally, part of the ABC transporter complex ModABC involved in molybdenum import. Responsible for energy coupling to the transport system. The protein is Molybdenum import ATP-binding protein ModC of Albidiferax ferrireducens (strain ATCC BAA-621 / DSM 15236 / T118) (Rhodoferax ferrireducens).